A 172-amino-acid polypeptide reads, in one-letter code: MKYTLSVLVEDEAGVLTRIAGLFARRGFNIESLAVGPAEQKGISRITMVVPGDDRTVEQLTKQLYKLVNILKVDNITEIPCVERELILVKINASTSSRPEILSILQVFRAKVVDLSENLLVLELTGDPGKVAAIQQLLQKFGIIEIARTGKIALTRTSKVNTEFLKSISMEI.

Residues threonine 4 to glutamate 78 enclose the ACT domain.

It belongs to the acetolactate synthase small subunit family. Dimer of large and small chains.

Its subcellular location is the plastid. It is found in the chloroplast. It catalyses the reaction 2 pyruvate + H(+) = (2S)-2-acetolactate + CO2. It functions in the pathway amino-acid biosynthesis; L-isoleucine biosynthesis; L-isoleucine from 2-oxobutanoate: step 1/4. It participates in amino-acid biosynthesis; L-valine biosynthesis; L-valine from pyruvate: step 1/4. The sequence is that of Acetolactate synthase small subunit (ilvH) from Cyanidium caldarium (Red alga).